Consider the following 110-residue polypeptide: T cell receptor alpha variable 22 (110 aa).

Positions 1-21 (MKRILGALLGLLSAQVCCVRG) are cleaved as a signal peptide. In terms of domain architecture, Ig-like spans 22-110 (IQVEQSPPDL…DSGVYFCAVE (89 aa)). N38 and N44 each carry an N-linked (GlcNAc...) asparagine glycan. A disulfide bridge connects residues C43 and C107.

In terms of assembly, alpha-beta TR is a heterodimer composed of an alpha and beta chain; disulfide-linked. The alpha-beta TR is associated with the transmembrane signaling CD3 coreceptor proteins to form the TR-CD3 (TcR or TCR). The assembly of alpha-beta TR heterodimers with CD3 occurs in the endoplasmic reticulum where a single alpha-beta TR heterodimer associates with one CD3D-CD3E heterodimer, one CD3G-CD3E heterodimer and one CD247 homodimer forming a stable octameric structure. CD3D-CD3E and CD3G-CD3E heterodimers preferentially associate with TR alpha and TR beta chains, respectively. The association of the CD247 homodimer is the last step of TcR assembly in the endoplasmic reticulum and is required for transport to the cell surface.

The protein resides in the cell membrane. Its function is as follows. V region of the variable domain of T cell receptor (TR) alpha chain that participates in the antigen recognition. Alpha-beta T cell receptors are antigen specific receptors which are essential to the immune response and are present on the cell surface of T lymphocytes. Recognize peptide-major histocompatibility (MH) (pMH) complexes that are displayed by antigen presenting cells (APC), a prerequisite for efficient T cell adaptive immunity against pathogens. Binding of alpha-beta TR to pMH complex initiates TR-CD3 clustering on the cell surface and intracellular activation of LCK that phosphorylates the ITAM motifs of CD3G, CD3D, CD3E and CD247 enabling the recruitment of ZAP70. In turn ZAP70 phosphorylates LAT, which recruits numerous signaling molecules to form the LAT signalosome. The LAT signalosome propagates signal branching to three major signaling pathways, the calcium, the mitogen-activated protein kinase (MAPK) kinase and the nuclear factor NF-kappa-B (NF-kB) pathways, leading to the mobilization of transcription factors that are critical for gene expression and essential for T cell growth and differentiation. The T cell repertoire is generated in the thymus, by V-(D)-J rearrangement. This repertoire is then shaped by intrathymic selection events to generate a peripheral T cell pool of self-MH restricted, non-autoaggressive T cells. Post-thymic interaction of alpha-beta TR with the pMH complexes shapes TR structural and functional avidity. This is T cell receptor alpha variable 22 from Homo sapiens (Human).